Consider the following 547-residue polypeptide: Cytochrome P450 monooxygenase cpsD (547 aa).

A helical membrane pass occupies residues 18–38 (LTGAALVVTLITSVIIVAADL). Cys476 contacts heme. The segment at 528-547 (RRRDARRTHEALGSKLKPEE) is disordered. Basic and acidic residues predominate over residues 534-547 (RTHEALGSKLKPEE).

The protein belongs to the cytochrome P450 family. Heme is required as a cofactor.

Its subcellular location is the membrane. It catalyses the reaction campesine B + campesine C + reduced [NADPH--hemoprotein reductase] + O2 = campesine D + oxidized [NADPH--hemoprotein reductase] + 2 H2O + 2 H(+). The enzyme catalyses 2 campesine B + reduced [NADPH--hemoprotein reductase] + O2 = campesine F + oxidized [NADPH--hemoprotein reductase] + 2 H2O + H(+). It carries out the reaction campesine C + campesine A + reduced [NADPH--hemoprotein reductase] + O2 = campesine E + oxidized [NADPH--hemoprotein reductase] + 2 H2O + 2 H(+). It participates in alkaloid biosynthesis. Functionally, cytochrome P450 monooxygenase; part of the gene cluster that mediates the biosynthesis of campesine G, a dimeric indole piperazine alkaloid that shows good insecticidal activity Galleria mellonella. Within the pathway, cpsD acts as a dimerase that simultaneously catalyzes one C-C bond (C3-C3') and two C-N bonds (C2-N16' and C2'-N16) coupling reactions between campesines B and C to produce a heterodimer with unexpected 6/5/6/6/6/6/5/6 eight-ring scaffold called campesine D. CpsD is also able to catalyze oxidative heterocoupling od campesines A with B to produce campesine F and campesines A with C to produce campesine E. The non-canonical non-ribosomal peptide synthetase cpsA catalyzes the first steps of the pathway by producing L-tryptophanal and L-valinal from their respective amino-acids. These products condensate spontaneously to form trypyl-valyl pyrazine also known as didehydrocampesine A. The NmrA-like family domain-containing oxidoreductase cpsB is the next enzyme in cps pathway and reduces the unstable didehydrocampesine A to campesine A. The methyltransferase cpsF and the acetyltransferase cpsE both recognize N13 of piperazine ring to carry out methylation and acetylation of campesine A to produce campesine C and B, respectively. The cytochrome P450 monooxygenase cpsD then acts as a dimerase that catalyzes oxidative heterocoupling between campesine B and C to produce heterodimers with unexpected 6/5/6/6/6/6/5/6 eight-ring scaffold called campesine D. Finally,the cytochrome P450 monooxygenase cpsC is a regioselective dehydrogenase that catalyzes dehydrogenation reaction towards C2-N1 to produce campesine G. The polypeptide is Cytochrome P450 monooxygenase cpsD (Aspergillus campestris (strain IBT 28561)).